The chain runs to 346 residues: Ketol-acid reductoisomerase (NADP(+)) (346 aa).

The KARI N-terminal Rossmann domain occupies 1–141 (KKNSILKKNQ…GAHHAGVLES (141 aa)). NADP(+)-binding positions include serine 11 and 41–43 (DKQ). Histidine 65 is an active-site residue. Glycine 91 serves as a coordination point for NADP(+). 2 consecutive KARI C-terminal knotted domains span residues 142–286 (SFVA…PEQE) and 287–346 (YYDH…NKVI). The Mg(2+) site is built by aspartate 150, glutamate 154, glutamate 322, and glutamate 326.

Belongs to the ketol-acid reductoisomerase family. Mg(2+) serves as cofactor.

The catalysed reaction is (2R)-2,3-dihydroxy-3-methylbutanoate + NADP(+) = (2S)-2-acetolactate + NADPH + H(+). It carries out the reaction (2R,3R)-2,3-dihydroxy-3-methylpentanoate + NADP(+) = (S)-2-ethyl-2-hydroxy-3-oxobutanoate + NADPH + H(+). The protein operates within amino-acid biosynthesis; L-isoleucine biosynthesis; L-isoleucine from 2-oxobutanoate: step 2/4. It functions in the pathway amino-acid biosynthesis; L-valine biosynthesis; L-valine from pyruvate: step 2/4. Its function is as follows. Involved in the biosynthesis of branched-chain amino acids (BCAA). Catalyzes an alkyl-migration followed by a ketol-acid reduction of (S)-2-acetolactate (S2AL) to yield (R)-2,3-dihydroxy-isovalerate. In the isomerase reaction, S2AL is rearranged via a Mg-dependent methyl migration to produce 3-hydroxy-3-methyl-2-ketobutyrate (HMKB). In the reductase reaction, this 2-ketoacid undergoes a metal-dependent reduction by NADPH to yield (R)-2,3-dihydroxy-isovalerate. The polypeptide is Ketol-acid reductoisomerase (NADP(+)) (ilvC) (Buchnera aphidicola subsp. Uroleucon rurale).